The chain runs to 396 residues: Elongation factor Tu (396 aa).

The region spanning 11 to 205 is the tr-type G domain; sequence KPHVNIGTIG…TIDEYIPTPV (195 aa). The tract at residues 20–27 is G1; that stretch reads GHVDHGKT. 20–27 lines the GTP pocket; it reads GHVDHGKT. Residue T27 coordinates Mg(2+). The interval 61-65 is G2; the sequence is GITIN. The segment at 82 to 85 is G3; that stretch reads DAPG. Residues 82–86 and 137–140 each bind GTP; these read DAPGH and NKTD. The segment at 137–140 is G4; the sequence is NKTD. The tract at residues 175-177 is G5; sequence SAL.

It belongs to the TRAFAC class translation factor GTPase superfamily. Classic translation factor GTPase family. EF-Tu/EF-1A subfamily. As to quaternary structure, monomer.

It is found in the cytoplasm. It carries out the reaction GTP + H2O = GDP + phosphate + H(+). GTP hydrolase that promotes the GTP-dependent binding of aminoacyl-tRNA to the A-site of ribosomes during protein biosynthesis. The chain is Elongation factor Tu from Lacticaseibacillus casei (strain BL23) (Lactobacillus casei).